Here is a 1010-residue protein sequence, read N- to C-terminus: Retinoblastoma-related protein 1 (1010 aa).

Residues 1–23 (MEGAAPPASSGSEVTGAGSGKVD) are disordered. Residues 419–619 (TPVSTAMTTA…EKGSSMYNSL (201 aa)) are domain A. Residues 419-861 (TPVSTAMTTA…NEVFIPTVKP (443 aa)) are pocket. The spacer stretch occupies residues 620 to 730 (IVARPTLSAE…PAAGGELCAE (111 aa)). The disordered stretch occupies residues 657–679 (LPPLPFQKQEHSPDKDEVRSPKR). Basic and acidic residues predominate over residues 664–679 (KQEHSPDKDEVRSPKR). The interval 731–861 (TGIGVFLSKI…NEVFIPTVKP (131 aa)) is domain B. A disordered region spans residues 868 to 898 (SGTSPNKKNEEKCAADGPYPESPRLSRFPNL).

The protein belongs to the retinoblastoma protein (RB) family.

It localises to the nucleus. Functionally, regulator of biological processes that recruits a histone deacetylase to control gene transcription. May play a role in the entry into mitosis, negatively regulating the cell proliferation. Formation of stable complexes with geminiviridae replication-associated proteins may create a cellular environment which favors viral DNA replication. In Oryza sativa subsp. japonica (Rice), this protein is Retinoblastoma-related protein 1 (RBR1).